The following is a 357-amino-acid chain: Non-structural protein NS2 (357 aa).

2 disordered regions span residues 169–191 and 229–266; these read PRLQ…DEAK and DERD…HPKT. The segment covering 233 to 249 has biased composition (basic and acidic residues); the sequence is EGDRDERGDEEQVKTLS. Residues 250 to 260 show a composition bias toward acidic residues; the sequence is DDDDQGEDASD.

Belongs to the orbivirus non-structural protein NS2 family.

Functionally, single-stranded RNA-binding protein. This Antilocapra americana (Pronghorn) protein is Non-structural protein NS2 (Segment-8).